The primary structure comprises 228 residues: Sodium channel regulatory subunit beta-4 (228 aa).

An N-terminal signal peptide occupies residues 1–30 (MPGARDQGAARARWLGIGLLGLFLLPVSLS). The Ig-like C2-type domain maps to 31–148 (LEVSVGKATT…NDFQHQATIF (118 aa)). Residues 31-162 (LEVSVGKATT…DKLEEVDNTV (132 aa)) lie on the Extracellular side of the membrane. Residues asparagine 45, asparagine 71, and asparagine 113 are each glycosylated (N-linked (GlcNAc...) asparagine). The cysteines at positions 53 and 131 are disulfide-linked. A helical membrane pass occupies residues 163–183 (TLIILGVVGGVIGLLIFILLV). Residues 184–228 (KKFIAFIIKKTQEKKKECLVSSSGNDNTENGLPGSKAEEKAPTKV) lie on the Cytoplasmic side of the membrane. Residues 198-228 (KKECLVSSSGNDNTENGLPGSKAEEKAPTKV) are disordered. The span at 203-213 (VSSSGNDNTEN) shows a compositional bias: polar residues. Residues 219–228 (KAEEKAPTKV) show a composition bias toward basic and acidic residues.

This sequence belongs to the sodium channel auxiliary subunit SCN4B (TC 8.A.17) family. As to quaternary structure, a voltage-gated sodium (Nav) channel consists of an ion-conducting pore-forming alpha subunit functional on its own that is regulated by one or more beta subunits. The beta subunit SCN4B is disulfide-linked to the pore-forming alpha subunit. Interacts with SCN1A; regulatory subunit of SCN1A/Nav1.1. Interacts with SCN2A; regulatory subunit of SCN2A/Nav1.2. Post-translationally, contains an interchain disulfide bond with SCN2A.

It localises to the cell membrane. In terms of biological role, regulatory subunit of multiple voltage-gated sodium (Nav) channels directly mediating the depolarization of excitable membranes. Navs, also called VGSCs (voltage-gated sodium channels) or VDSCs (voltage-dependent sodium channels), operate by switching between closed and open conformations depending on the voltage difference across the membrane. In the open conformation they allow Na(+) ions to selectively pass through the pore, along their electrochemical gradient. The influx of Na+ ions provokes membrane depolarization, initiating the propagation of electrical signals throughout cells and tissues. The accessory beta subunits participate in localization and functional modulation of the Nav channels. Modulates the activity of SCN1A/Nav1.1. Modulates the activity of SCN2A/Nav1.2. The polypeptide is Sodium channel regulatory subunit beta-4 (Bos taurus (Bovine)).